Here is a 551-residue protein sequence, read N- to C-terminus: MQTVETLNEGLKRAYTVTIPANDVAQRVEAEIKSIAPQVRMPGFRPGKVPANLIKKMHGPAIEQDVLNKTVQDGVQQLLAEQKLRPAMQPSVELVGGDYEPGKDVALKVELEVLPDVPPPAIEGLKLERLSVEAPTDEIDAQIKRIADQQKRYDDAKDGHPAVEGDLVVLDFAGSVDGVAFEGGTGTGMSVELGSGRLIPGFEDQLEGIKKGESRSLNVTFPKDYGEKSLAGKAAVFEVTATDVRVPGETKVDDEFAQSLGLQGLDQLRELIKGQVEQELNGLTRTHMKRKLLDQLAAGHDFPVPPSMVEAEFGQIWAQLEHEATHEEDPEAARAEMEKDRDDYRAIAERRVRLGLLLSEIGQQNGVEVSAQEMQRLVQQAAMQYQPADRDRFVQYLQQDPMAAAQLRAPLYEDKVVDFLFDKAEVSDRTVTRDELEAAIEADDDTIGKGHVHGPGCGHDHHDHDHDHDHAAPAKKPAAKKAAAKPAAEEAPAAEDKPAAKKKAAVKTEEAAEAAPAPKKAPAKKAAAAKAEEAPAAAPKKAPAKKKAAAE.

The region spanning Gly165–Thr250 is the PPIase FKBP-type domain. The disordered stretch occupies residues Ala442–Glu551. Residues Gly458–Ala472 show a composition bias toward basic and acidic residues. Over residues Glu513–Lys541 the composition is skewed to low complexity. Positions Ala542–Glu551 are enriched in basic residues.

The protein belongs to the FKBP-type PPIase family. Tig subfamily.

It localises to the cytoplasm. The catalysed reaction is [protein]-peptidylproline (omega=180) = [protein]-peptidylproline (omega=0). Its function is as follows. Involved in protein export. Acts as a chaperone by maintaining the newly synthesized protein in an open conformation. Functions as a peptidyl-prolyl cis-trans isomerase. The chain is Trigger factor from Rhizorhabdus wittichii (strain DSM 6014 / CCUG 31198 / JCM 15750 / NBRC 105917 / EY 4224 / RW1) (Sphingomonas wittichii).